The following is a 302-amino-acid chain: Sulfate adenylyltransferase subunit 2 (302 aa).

It belongs to the PAPS reductase family. CysD subfamily. As to quaternary structure, heterodimer composed of CysD, the smaller subunit, and CysN.

The enzyme catalyses sulfate + ATP + H(+) = adenosine 5'-phosphosulfate + diphosphate. The protein operates within sulfur metabolism; hydrogen sulfide biosynthesis; sulfite from sulfate: step 1/3. Its function is as follows. With CysN forms the ATP sulfurylase (ATPS) that catalyzes the adenylation of sulfate producing adenosine 5'-phosphosulfate (APS) and diphosphate, the first enzymatic step in sulfur assimilation pathway. APS synthesis involves the formation of a high-energy phosphoric-sulfuric acid anhydride bond driven by GTP hydrolysis by CysN coupled to ATP hydrolysis by CysD. This is Sulfate adenylyltransferase subunit 2 from Bacteroides thetaiotaomicron (strain ATCC 29148 / DSM 2079 / JCM 5827 / CCUG 10774 / NCTC 10582 / VPI-5482 / E50).